The primary structure comprises 185 residues: Ribosome-recycling factor (185 aa).

It belongs to the RRF family.

The protein resides in the cytoplasm. Responsible for the release of ribosomes from messenger RNA at the termination of protein biosynthesis. May increase the efficiency of translation by recycling ribosomes from one round of translation to another. The sequence is that of Ribosome-recycling factor from Shewanella sp. (strain W3-18-1).